Consider the following 165-residue polypeptide: Selenoprotein F (165 aa).

The first 31 residues, 1 to 31 (MVAMAAGPSGCLVPAFGLRLLLATVLQAVSA), serve as a signal peptide directing secretion. A non-standard amino acid (selenocysteine) is located at residue Sec-96.

In terms of assembly, forms a tight complex with UGGT1/UGCGL1. Interacts with UGGT2/UGCGL2. Interacts with RDH11. Post-translationally, the N-terminus is blocked. As to expression, higher levels in prostate and thyroid gland.

The protein localises to the endoplasmic reticulum lumen. Functionally, may be involved in redox reactions associated with the formation of disulfide bonds. May contribute to the quality control of protein folding in the endoplasmic reticulum. May regulate protein folding by enhancing the catalytic activity of UGGT1/UGCGL1 and UGGT2/UGCGL2. The polypeptide is Selenoprotein F (Homo sapiens (Human)).